We begin with the raw amino-acid sequence, 481 residues long: UDP-glycosyltransferase 72B3 (481 aa).

Residues Ser277, 347-349, 364-372, and 386-389 each bind UDP-alpha-D-glucose; these read APQ, HCGWNSSLE, and YAEQ.

The protein belongs to the UDP-glycosyltransferase family.

Functionally, possesses low quercetin 3-O-glucosyltransferase activity in vitro. The protein is UDP-glycosyltransferase 72B3 (UGT72B3) of Arabidopsis thaliana (Mouse-ear cress).